Reading from the N-terminus, the 189-residue chain is Interferon alpha-5 (189 aa).

A signal peptide spans 1–23; the sequence is MARLCAFLMVLPVLSYWPTCSLG. Cystine bridges form between Cys-24-Cys-122 and Cys-52-Cys-162. An N-linked (GlcNAc...) asparagine glycan is attached at Asn-101.

The protein belongs to the alpha/beta interferon family.

The protein resides in the secreted. In terms of biological role, produced by macrophages, IFN-alpha have antiviral activities. Interferon stimulates the production of two enzymes: a protein kinase and an oligoadenylate synthetase. This is Interferon alpha-5 (Ifna5) from Mus musculus (Mouse).